Reading from the N-terminus, the 267-residue chain is Membrane-spanning 4-domains subfamily A member 10 (267 aa).

The Cytoplasmic portion of the chain corresponds to 1–61 (MKAEATVIPS…KKSSLLKELG (61 aa)). Residues 62–82 (AFHITIALLHLVFGGYLASIV) traverse the membrane as a helical segment. The Extracellular segment spans residues 83-91 (KNLHLVVLK). A helical membrane pass occupies residues 92–112 (SWYPFWGAASFLISGILAITM). Residues 113-121 (KTFSKTYLK) are Cytoplasmic-facing. A helical membrane pass occupies residues 122–142 (MLCLMTNLISLFCVLSGLFVI). Residues 143 to 171 (SKDLFLESPFESPIWRMYPNSTVHIQRLE) are Extracellular-facing. A helical transmembrane segment spans residues 172 to 192 (LALLCFTVLELFLPVPTAVTA). The Cytoplasmic segment spans residues 193–267 (WRGDCPSAKN…GAAIWTQTAN (75 aa)).

It belongs to the MS4A family.

The protein localises to the membrane. Its function is as follows. May be involved in signal transduction as a component of a multimeric receptor complex. This Homo sapiens (Human) protein is Membrane-spanning 4-domains subfamily A member 10 (MS4A10).